A 46-amino-acid polypeptide reads, in one-letter code: U1-plectoxin-Pt1f (46 aa).

Cystine bridges form between Cys-4–Cys-18, Cys-11–Cys-24, Cys-17–Cys-35, Cys-21–Cys-44, and Cys-26–Cys-33.

The protein belongs to the neurotoxin 02 (plectoxin) family. 02 (plectoxin) subfamily. As to expression, expressed by the venom gland.

The protein resides in the secreted. In terms of biological role, potent toxin that may paralyze and/or kill insect pests such as H.virescens (lepidoptera), S.exigua (beet armyworm) and M.sexta (tobacco hornworm). This chain is U1-plectoxin-Pt1f, found in Plectreurys tristis (Spider).